A 509-amino-acid polypeptide reads, in one-letter code: ATP synthase subunit alpha (509 aa).

G169–T176 is a binding site for ATP.

This sequence belongs to the ATPase alpha/beta chains family. In terms of assembly, F-type ATPases have 2 components, CF(1) - the catalytic core - and CF(0) - the membrane proton channel. CF(1) has five subunits: alpha(3), beta(3), gamma(1), delta(1), epsilon(1). CF(0) has three main subunits: a(1), b(2) and c(9-12). The alpha and beta chains form an alternating ring which encloses part of the gamma chain. CF(1) is attached to CF(0) by a central stalk formed by the gamma and epsilon chains, while a peripheral stalk is formed by the delta and b chains.

Its subcellular location is the cell inner membrane. The enzyme catalyses ATP + H2O + 4 H(+)(in) = ADP + phosphate + 5 H(+)(out). Functionally, produces ATP from ADP in the presence of a proton gradient across the membrane. The alpha chain is a regulatory subunit. The protein is ATP synthase subunit alpha of Zymomonas mobilis subsp. mobilis (strain ATCC 31821 / ZM4 / CP4).